Reading from the N-terminus, the 660-residue chain is RalBP1-associated Eps domain-containing protein 2 (660 aa).

The 114-residue stretch at glutamate 34–glutamate 147 folds into the EH 1 domain. The tract at residues glutamate 169 to leucine 208 is disordered. Phosphoserine is present on serine 254. The region spanning glutamine 282 to phenylalanine 373 is the EH 2 domain. The EF-hand domain maps to leucine 315 to arginine 350. Residues aspartate 328, aspartate 330, aspartate 332, and glutamate 339 each coordinate Ca(2+). Residues asparagine 433–isoleucine 616 are disordered. Threonine 479 is modified (phosphothreonine). At serine 493 the chain carries Phosphoserine. Positions leucine 512–cysteine 523 are enriched in pro residues. Residues proline 514–leucine 660 are interaction with RALBP1. Residues proline 561–leucine 660 form an interaction with ASAP1 region. Residues proline 582–threonine 594 show a composition bias toward low complexity. Positions valine 601–valine 657 form a coiled coil.

Interacts with EPN1; the interaction is direct. Interacts with EPS15; the interaction is direct. Interacts with EPS15L1. Interacts with RALBP1; can form a ternary complex with activated Ral (RALA or RALB). Interacts with ASAP1; the interaction is direct and this complex can bind paxillin. Also forms a ternary complex with RALBP1 and ASAP1. Interacts with GRB2. Tyrosine-phosphorylated upon stimulation of cells with EGF. Phosphorylation on Tyr-residues induces its association with the EGF receptor probably indirectly through an adapter like GRB2. Expressed at high levels in the cerebrum, cerebellum, lung, kidney, and testis. Weakly expressed in the kidney. Isoform 2 is down-regulated during progression of prostate cancer.

The protein resides in the cytoplasm. Involved in ligand-dependent receptor mediated endocytosis of the EGF and insulin receptors as part of the Ral signaling pathway. By controlling growth factor receptors endocytosis may regulate cell survival. Through ASAP1 may regulate cell adhesion and migration. This is RalBP1-associated Eps domain-containing protein 2 (REPS2) from Homo sapiens (Human).